We begin with the raw amino-acid sequence, 520 residues long: Cytochrome P450 1A1 (520 aa).

F230 is a substrate binding site. C464 lines the heme pocket.

It belongs to the cytochrome P450 family. Heme is required as a cofactor.

The protein resides in the endoplasmic reticulum membrane. It localises to the microsome membrane. The catalysed reaction is an organic molecule + reduced [NADPH--hemoprotein reductase] + O2 = an alcohol + oxidized [NADPH--hemoprotein reductase] + H2O + H(+). In terms of biological role, cytochromes P450 are a group of heme-thiolate monooxygenases. In liver microsomes, this enzyme is involved in an NADPH-dependent electron transport pathway. It oxidizes a variety of structurally unrelated compounds, including steroids, fatty acids, and xenobiotics. This chain is Cytochrome P450 1A1 (cyp1a1), found in Dicentrarchus labrax (European seabass).